The chain runs to 348 residues: sn-glycerol-3-phosphate import ATP-binding protein UgpC 3 (348 aa).

Residues 4 to 234 enclose the ABC transporter domain; the sequence is INIIDVKKNY…PASLFVASFI (231 aa). An ATP-binding site is contributed by 36-43; that stretch reads GPSGCGKS.

The protein belongs to the ABC transporter superfamily. sn-glycerol-3-phosphate importer (TC 3.A.1.1.3) family. As to quaternary structure, the complex is composed of two ATP-binding proteins (UgpC), two transmembrane proteins (UgpA and UgpE) and a solute-binding protein (UgpB).

It is found in the cell inner membrane. The catalysed reaction is sn-glycerol 3-phosphate(out) + ATP + H2O = sn-glycerol 3-phosphate(in) + ADP + phosphate + H(+). Its function is as follows. Part of the ABC transporter complex UgpBAEC involved in sn-glycerol-3-phosphate (G3P) import. Responsible for energy coupling to the transport system. In Rhizobium johnstonii (strain DSM 114642 / LMG 32736 / 3841) (Rhizobium leguminosarum bv. viciae), this protein is sn-glycerol-3-phosphate import ATP-binding protein UgpC 3.